A 435-amino-acid polypeptide reads, in one-letter code: Gamma-glutamyl phosphate reductase (435 aa).

This sequence belongs to the gamma-glutamyl phosphate reductase family.

The protein resides in the cytoplasm. The enzyme catalyses L-glutamate 5-semialdehyde + phosphate + NADP(+) = L-glutamyl 5-phosphate + NADPH + H(+). It functions in the pathway amino-acid biosynthesis; L-proline biosynthesis; L-glutamate 5-semialdehyde from L-glutamate: step 2/2. In terms of biological role, catalyzes the NADPH-dependent reduction of L-glutamate 5-phosphate into L-glutamate 5-semialdehyde and phosphate. The product spontaneously undergoes cyclization to form 1-pyrroline-5-carboxylate. This is Gamma-glutamyl phosphate reductase from Parasynechococcus marenigrum (strain WH8102).